A 201-amino-acid polypeptide reads, in one-letter code: MSKVLVLKSSILATYSQSNQLADFFVEQWKTAHAGDEITVRDLAAQPIPVLDGELVGALRPSDAALTPRQQEALALSDELIAELQANDVIVMAAPMYNFNIPTQLKNYFDLIARAGVTFRYTEKGPEGLITGKRAIILTSRGGIHKDTPTDLVVPYLRLFLGFIGITDVKFVFAEGIAYGPEVATKAQADAKELLTQVVSA.

Residues Ser10, 16–18, 96–99, and 140–143 each bind FMN; these read SQS, MYNF, and SRGG.

The protein belongs to the azoreductase type 1 family. Homodimer. The cofactor is FMN.

The enzyme catalyses 2 a quinone + NADH + H(+) = 2 a 1,4-benzosemiquinone + NAD(+). It catalyses the reaction N,N-dimethyl-1,4-phenylenediamine + anthranilate + 2 NAD(+) = 2-(4-dimethylaminophenyl)diazenylbenzoate + 2 NADH + 2 H(+). Its function is as follows. Quinone reductase that provides resistance to thiol-specific stress caused by electrophilic quinones. In terms of biological role, also exhibits azoreductase activity. Catalyzes the reductive cleavage of the azo bond in aromatic azo compounds to the corresponding amines. This is FMN-dependent NADH:quinone oxidoreductase from Yersinia enterocolitica serotype O:8 / biotype 1B (strain NCTC 13174 / 8081).